Consider the following 567-residue polypeptide: Phenylalanine--tRNA ligase beta subunit (567 aa).

In terms of domain architecture, B5 spans 284–359 (FAVRTKHVSH…RAYDFNDLTP (76 aa)). 4 residues coordinate Mg(2+): Asp337, Asp343, Asp346, and Asp347.

The protein belongs to the phenylalanyl-tRNA synthetase beta subunit family. Type 2 subfamily. Tetramer of two alpha and two beta subunits. Mg(2+) is required as a cofactor.

Its subcellular location is the cytoplasm. The enzyme catalyses tRNA(Phe) + L-phenylalanine + ATP = L-phenylalanyl-tRNA(Phe) + AMP + diphosphate + H(+). The protein is Phenylalanine--tRNA ligase beta subunit of Halobacterium salinarum (strain ATCC 29341 / DSM 671 / R1).